Here is a 531-residue protein sequence, read N- to C-terminus: Acid-sensing ion channel 3 (531 aa).

Residues 1–43 (MKPTSGPEEARRPASDIRVFASNCSMHGLGHVFGPGSLSLRRG) lie on the Cytoplasmic side of the membrane. A helical transmembrane segment spans residues 44-61 (MWAAAVVLSVATFLYQVA). Residues 62–441 (ERVRYYREFH…SELLGDIGGQ (380 aa)) lie on the Extracellular side of the membrane. Intrachain disulfides connect cysteine 92–cysteine 186, cysteine 164–cysteine 171, cysteine 282–cysteine 370, cysteine 315–cysteine 366, cysteine 319–cysteine 364, cysteine 328–cysteine 350, and cysteine 330–cysteine 342. Residue asparagine 175 is glycosylated (N-linked (GlcNAc...) asparagine). The disordered stretch occupies residues 285-307 (ASLNPNYEPEPSDPLGSPSPSPS). Asparagine 398 carries N-linked (GlcNAc...) asparagine glycosylation. Residues 442-460 (MGLFIGASLLTILEILDYL) form a helical membrane-spanning segment. Positions 447-449 (GAS) match the GAS motif; ion selectivity filter motif. Over 461-531 (CEVFRDKVLG…HRTCYLVTQL (71 aa)) the chain is Cytoplasmic. Positions 528–531 (VTQL) match the PDZ-binding motif.

The protein belongs to the amiloride-sensitive sodium channel (TC 1.A.6) family. ASIC3 subfamily. Can form homotrimeric channels. Heterotrimer; forms functional heterotrimers producing channel with different properties. Forms heterotrimers with ASIC2; gives rise to a biphasic current with a sustained current which discriminates poorly between Na(+) and K(+). Interacts with STOM; inhibits ASIC3 acid-evoked current. Interacts with LIN7B (via PDZ domain); increases ASIC3 expression at the plasma membrane. Interacts with MAGI1 (via PDZ domain); probably regulates ASIC3. Interacts with GOPC (via PDZ domain); probably regulates ASIC3. Interacts with DLG4 (via PDZ domain); reduces ASIC3 expression at the plasma membrane. As to expression, expressed by sensory neurons. Strongly expressed in brain, spinal cord, lung, lymph nodes, kidney, pituitary, heart and testis.

Its subcellular location is the cell membrane. It is found in the cytoplasm. The enzyme catalyses Na(+)(in) = Na(+)(out). It carries out the reaction K(+)(in) = K(+)(out). The catalysed reaction is Ca(2+)(in) = Ca(2+)(out). With respect to regulation, inhibited by the diuretic drug amiloride. Inhibited by the diuretic drug triamterene. Potentiated by the vertebrate neuropeptide FF (NPFF) and the related FMRFamide. Specifically and reversibly inhibited by the a sea anemone toxin APETx2. In terms of biological role, forms pH-gated heterotrimeric sodium channels that act as postsynaptic excitatory receptors in the nervous system. Upon extracellular acidification, these channels generate a biphasic current with a fast inactivating and a slow sustained phase. ASIC3 is more sensitive to protons and gates between closed, open, and desensitized states faster than other ASICs. Displays high selectivity for sodium ions but can also permit the permeation of other cations. As a neuronal acid sensor, probably contributes to mechanoreception, acid nociception, and heat nociception. By forming heterotrimeric channels with ASIC2, generates a biphasic current with a fast inactivating and a slow sustained phase, which in sensory neurons is proposed to mediate the pain induced by acidosis that occurs in ischemic, damaged or inflamed tissues. The sequence is that of Acid-sensing ion channel 3 from Homo sapiens (Human).